Here is a 129-residue protein sequence, read N- to C-terminus: Putative pre-16S rRNA nuclease (129 aa).

Belongs to the YqgF nuclease family.

The protein localises to the cytoplasm. Its function is as follows. Could be a nuclease involved in processing of the 5'-end of pre-16S rRNA. In Campylobacter jejuni subsp. doylei (strain ATCC BAA-1458 / RM4099 / 269.97), this protein is Putative pre-16S rRNA nuclease.